The primary structure comprises 160 residues: Phosphopantetheine adenylyltransferase (160 aa).

Substrate is bound at residue Ser-9. Residues 9 to 10 (SF) and His-17 contribute to the ATP site. 3 residues coordinate substrate: Lys-41, Val-73, and Lys-87. ATP-binding positions include 88–90 (GLR), Glu-98, and 122–128 (YSFVSSS).

It belongs to the bacterial CoaD family. As to quaternary structure, homohexamer. Requires Mg(2+) as cofactor.

It localises to the cytoplasm. It catalyses the reaction (R)-4'-phosphopantetheine + ATP + H(+) = 3'-dephospho-CoA + diphosphate. Its pathway is cofactor biosynthesis; coenzyme A biosynthesis; CoA from (R)-pantothenate: step 4/5. In terms of biological role, reversibly transfers an adenylyl group from ATP to 4'-phosphopantetheine, yielding dephospho-CoA (dPCoA) and pyrophosphate. In Mycobacterium avium (strain 104), this protein is Phosphopantetheine adenylyltransferase.